A 392-amino-acid polypeptide reads, in one-letter code: Chorismate synthase (392 aa).

Residues Arg39 and Arg45 each contribute to the NADP(+) site. FMN contacts are provided by residues 131 to 133 (RSS), 255 to 256 (NA), Gly300, 315 to 319 (KPIPT), and Arg341.

The protein belongs to the chorismate synthase family. As to quaternary structure, homotetramer. FMNH2 serves as cofactor.

It catalyses the reaction 5-O-(1-carboxyvinyl)-3-phosphoshikimate = chorismate + phosphate. Its pathway is metabolic intermediate biosynthesis; chorismate biosynthesis; chorismate from D-erythrose 4-phosphate and phosphoenolpyruvate: step 7/7. In terms of biological role, catalyzes the anti-1,4-elimination of the C-3 phosphate and the C-6 proR hydrogen from 5-enolpyruvylshikimate-3-phosphate (EPSP) to yield chorismate, which is the branch point compound that serves as the starting substrate for the three terminal pathways of aromatic amino acid biosynthesis. This reaction introduces a second double bond into the aromatic ring system. The polypeptide is Chorismate synthase (Leuconostoc citreum (strain KM20)).